The chain runs to 98 residues: NADH-ubiquinone oxidoreductase chain 4L (98 aa).

A run of 3 helical transmembrane segments spans residues 2-22, 29-49, and 61-81; these read PSIS…MLMF, SLLC…LIIL, and ILLL…LVMI.

The protein belongs to the complex I subunit 4L family. In terms of assembly, core subunit of respiratory chain NADH dehydrogenase (Complex I) which is composed of 45 different subunits.

The protein resides in the mitochondrion inner membrane. It catalyses the reaction a ubiquinone + NADH + 5 H(+)(in) = a ubiquinol + NAD(+) + 4 H(+)(out). Functionally, core subunit of the mitochondrial membrane respiratory chain NADH dehydrogenase (Complex I) which catalyzes electron transfer from NADH through the respiratory chain, using ubiquinone as an electron acceptor. Part of the enzyme membrane arm which is embedded in the lipid bilayer and involved in proton translocation. This Mirza coquereli (Coquerel's giant mouse lemur) protein is NADH-ubiquinone oxidoreductase chain 4L (MT-ND4L).